The primary structure comprises 107 residues: UPF0145 protein Sfri_2095 (107 aa).

This sequence belongs to the UPF0145 family.

This chain is UPF0145 protein Sfri_2095, found in Shewanella frigidimarina (strain NCIMB 400).